Reading from the N-terminus, the 1381-residue chain is Hepatocyte growth factor receptor (1381 aa).

The first 24 residues, 1–24 (MKAPAVLAPGILVLLFTLVQKSDG), serve as a signal peptide directing secretion. At 25-934 (ECKEALVKSE…VQPDQNFTGL (910 aa)) the chain is on the extracellular side. Residues 27–515 (KEALVKSEMN…TGKKITKIPL (489 aa)) enclose the Sema domain. Asn-45 carries N-linked (GlcNAc...) asparagine glycosylation. 4 disulfides stabilise this stretch: Cys-95-Cys-101, Cys-98-Cys-160, Cys-133-Cys-141, and Cys-172-Cys-175. Asn-106 carries N-linked (GlcNAc...) asparagine glycosylation. Asn-202 and Asn-358 each carry an N-linked (GlcNAc...) asparagine glycan. Cystine bridges form between Cys-298–Cys-363 and Cys-385–Cys-397. 3 N-linked (GlcNAc...) asparagine glycosylation sites follow: Asn-399, Asn-405, and Asn-449. 4 cysteine pairs are disulfide-bonded: Cys-520–Cys-538, Cys-526–Cys-561, Cys-529–Cys-545, and Cys-541–Cys-551. Asn-553 carries N-linked (GlcNAc...) asparagine glycosylation. IPT/TIG domains are found at residues 563-655 (PTIY…FSYV), 657-739 (PIIT…FSYR), and 742-836 (PIVY…LIYV). A glycan (O-linked (Man) threonine) is linked at Thr-582. Asn-607 and Asn-635 each carry an N-linked (GlcNAc...) asparagine glycan. Thr-676 and Thr-761 each carry an O-linked (Man) threonine glycan. 3 N-linked (GlcNAc...) asparagine glycosylation sites follow: Asn-785, Asn-879, and Asn-930. A helical membrane pass occupies residues 935-955 (IVGVVSISIILLLLLGLFLWL). The Cytoplasmic portion of the chain corresponds to 956 to 1381 (KRRKQIKDLG…QDNVDGEVDT (426 aa)). Phosphoserine is present on Ser-966. Thr-977 bears the Phosphothreonine mark. Phosphoserine is present on residues Ser-990, Ser-997, and Ser-1000. The residue at position 1003 (Tyr-1003) is a Phosphotyrosine. A Protein kinase domain is found at 1078 to 1345 (VHFNEVIGRG…RISAIFSTFI (268 aa)). ATP-binding positions include 1084–1092 (IGRGHFGCV) and Lys-1110. The active-site Proton acceptor is Asp-1204. The interaction with RANBP9 stretch occupies residues 1212–1381 (LDEKFTVKVA…QDNVDGEVDT (170 aa)). Position 1230 is a phosphotyrosine (Tyr-1230). Phosphotyrosine; by autocatalysis is present on residues Tyr-1234 and Tyr-1235. At Thr-1289 the chain carries Phosphothreonine. Positions 1320 to 1359 (WHPKAELRPSFSELVSRISAIFSTFIGEHYVHVNATYVNV) are interaction with MUC20. Residues Tyr-1349 and Tyr-1356 each carry the phosphotyrosine; by autocatalysis modification. Residue Tyr-1365 is modified to Phosphotyrosine.

The protein belongs to the protein kinase superfamily. Tyr protein kinase family. In terms of assembly, heterodimer made of an alpha chain (50 kDa) and a beta chain (145 kDa) which are disulfide linked. Binds PLXNB1. Interacts when phosphorylated with downstream effectors including STAT3, PIK3R1, SRC, PCLG1, GRB2 and GAB1. Interacts with SPSB1, SPSB2 and SPSB4. Interacts with INPP5D/SHIP1. When phosphorylated at Tyr-1356, interacts with INPPL1/SHIP2. Interacts with RANBP9 and RANBP10, as well as SPSB1, SPSB2, SPSB3 and SPSB4. SPSB1 binding occurs in the presence and in the absence of HGF, however HGF treatment has a positive effect on this interaction. Interacts with MUC20; prevents interaction with GRB2 and suppresses hepatocyte growth factor-induced cell proliferation. Interacts with GRB10. Interacts with PTPN1 and PTPN2. Interacts with HSP90AA1 and HSP90AB1; the interaction suppresses MET kinase activity. Interacts with tensin TNS3. Interacts (when phosphorylated) with tensin TNS4 (via SH2 domain); the interaction increases MET protein stability by inhibiting MET endocytosis and subsequent lysosomal degradation. Post-translationally, autophosphorylated in response to ligand binding on Tyr-1234 and Tyr-1235 in the kinase domain leading to further phosphorylation of Tyr-1349 and Tyr-1356 in the C-terminal multifunctional docking site. Dephosphorylated by PTPRJ at Tyr-1349 and Tyr-1365. Dephosphorylated by PTPN1 and PTPN2. In terms of processing, ubiquitinated. Ubiquitination by CBL regulates the receptor stability and activity through proteasomal degradation. O-mannosylation of IPT/TIG domains by TMEM260 is required for protein maturation. O-mannosylated residues are composed of single mannose glycans that are not elongated or modified.

The protein resides in the membrane. The catalysed reaction is L-tyrosyl-[protein] + ATP = O-phospho-L-tyrosyl-[protein] + ADP + H(+). In its inactive state, the C-terminal tail interacts with the catalytic domain and inhibits the kinase activity. Upon ligand binding, the C-terminal tail is displaced and becomes phosphorylated, thus increasing the kinase activity. Receptor tyrosine kinase that transduces signals from the extracellular matrix into the cytoplasm by binding to hepatocyte growth factor/HGF ligand. Regulates many physiological processes including proliferation, scattering, morphogenesis and survival. Ligand binding at the cell surface induces autophosphorylation of MET on its intracellular domain that provides docking sites for downstream signaling molecules. Following activation by ligand, interacts with the PI3-kinase subunit PIK3R1, PLCG1, SRC, GRB2, STAT3 or the adapter GAB1. Recruitment of these downstream effectors by MET leads to the activation of several signaling cascades including the RAS-ERK, PI3 kinase-AKT, or PLCgamma-PKC. The RAS-ERK activation is associated with the morphogenetic effects while PI3K/AKT coordinates prosurvival effects. During embryonic development, MET signaling plays a role in gastrulation, development and migration of muscles and neuronal precursors, angiogenesis and kidney formation. In adults, participates in wound healing as well as organ regeneration and tissue remodeling. Also promotes differentiation and proliferation of hematopoietic cells. The protein is Hepatocyte growth factor receptor (MET) of Equus caballus (Horse).